We begin with the raw amino-acid sequence, 685 residues long: Translation initiation factor IF-2 (685 aa).

The segment at 60-79 is disordered; that stretch reads ISLAKTREPSKEKTEAKKPP. The span at 64–79 shows a compositional bias: basic and acidic residues; the sequence is KTREPSKEKTEAKKPP. Positions 175–352 constitute a tr-type G domain; the sequence is NRPPVVTVMG…DIRCIPDSPV (178 aa). The G1 stretch occupies residues 184–191; sequence GHVDHGKT. Residue 184–191 participates in GTP binding; sequence GHVDHGKT. Residues 209 to 213 are G2; the sequence is GITQS. The segment at 230-233 is G3; it reads DTPG. GTP-binding positions include 230 to 234 and 284 to 287; these read DTPGH and NKID. Residues 284-287 are G4; sequence NKID. A G5 region spans residues 321–323; the sequence is SAR.

Belongs to the TRAFAC class translation factor GTPase superfamily. Classic translation factor GTPase family. IF-2 subfamily.

It localises to the cytoplasm. One of the essential components for the initiation of protein synthesis. Protects formylmethionyl-tRNA from spontaneous hydrolysis and promotes its binding to the 30S ribosomal subunits. Also involved in the hydrolysis of GTP during the formation of the 70S ribosomal complex. This chain is Translation initiation factor IF-2, found in Fervidobacterium nodosum (strain ATCC 35602 / DSM 5306 / Rt17-B1).